A 176-amino-acid polypeptide reads, in one-letter code: NAD(P)H-quinone oxidoreductase subunit 6, chloroplastic (176 aa).

Transmembrane regions (helical) follow at residues 10 to 30 (ILLVFLGLGLILGGLGVVLLT), 32 to 52 (PIYSAFSLGLVLVCISLFHIP), 61 to 81 (AQLLIYVGAVNVLIVFAVMFM), 107 to 127 (ILFSLITTIWNTSWYGIIWTT), and 152 to 172 (FYLPFELISIILLAALIGAIA).

The protein belongs to the complex I subunit 6 family. As to quaternary structure, NDH is composed of at least 16 different subunits, 5 of which are encoded in the nucleus.

It localises to the plastid. It is found in the chloroplast thylakoid membrane. The enzyme catalyses a plastoquinone + NADH + (n+1) H(+)(in) = a plastoquinol + NAD(+) + n H(+)(out). It catalyses the reaction a plastoquinone + NADPH + (n+1) H(+)(in) = a plastoquinol + NADP(+) + n H(+)(out). Functionally, NDH shuttles electrons from NAD(P)H:plastoquinone, via FMN and iron-sulfur (Fe-S) centers, to quinones in the photosynthetic chain and possibly in a chloroplast respiratory chain. The immediate electron acceptor for the enzyme in this species is believed to be plastoquinone. Couples the redox reaction to proton translocation, and thus conserves the redox energy in a proton gradient. In Calycanthus floridus var. glaucus (Eastern sweetshrub), this protein is NAD(P)H-quinone oxidoreductase subunit 6, chloroplastic (ndhG).